Reading from the N-terminus, the 165-residue chain is Serine/threonine-protein phosphatase 2A 56 kDa regulatory subunit epsilon isoform (165 aa).

The segment at 1-41 (MSSAPTTPPSVDKVDGFSRKSVRKARQKRSQSSSQFRSQGK) is disordered. Residue S2 is modified to N-acetylserine. T7 is subject to Phosphothreonine. A compositionally biased stretch (basic residues) spans 20–29 (KSVRKARQKR). Phosphoserine is present on residues S30, S32, and S34. A compositionally biased stretch (low complexity) spans 30–41 (SQSSSQFRSQGK).

This sequence belongs to the phosphatase 2A regulatory subunit B56 family. In terms of assembly, PP2A consists of a common heterodimeric core enzyme, composed of a 36 kDa catalytic subunit (subunit C) and a 65 kDa constant regulatory subunit (PR65 or subunit A), that associates with a variety of regulatory subunits. Proteins that associate with the core dimer include three families of regulatory subunits B (the R2/B/PR55/B55, R3/B''/PR72/PR130/PR59 and R5/B'/B56 families), the 48 kDa variable regulatory subunit, viral proteins, and cell signaling molecules. Interacts with SGO1. Found in a complex with at least ARL2, PPP2CB; PPP2R1A, PPP2R2A, PPP2R5E and TBCD. Highly expressed in testis, lung and brain.

Its subcellular location is the cytoplasm. Functionally, the B regulatory subunit might modulate substrate selectivity and catalytic activity, and might also direct the localization of the catalytic enzyme to a particular subcellular compartment. The sequence is that of Serine/threonine-protein phosphatase 2A 56 kDa regulatory subunit epsilon isoform (PPP2R5E) from Oryctolagus cuniculus (Rabbit).